Here is a 337-residue protein sequence, read N- to C-terminus: MRLTASAIAEQFGLTVVGDGTTEVSGVATLAHAGAGQLSFLSNPRYRPQLADTQAAVVVLRADDADAAKGTALVAKDPYTAFAKIAALFDVAPVREPGIHASAVIDPTAQVSPGAHVGPFVSIGARSRVGDGCVIGTGSIIGEDCVVDEGSELLARVTLVTRVRLGKRVRIHPGAVIGADGFGLAMDAGHWIKVPQLGGVVIGDDCEIGANTCIDRGALEDTVLEEDVRVDNLVQIAHNCRIGAHSAIAGCTGIAGSAKIGRYCLLGGHVGVVGHLEICDKVVITGKSVVRNSIHEPGEYSSGTPLTDNRTWRKNAARFKQLDVLARRILAVGKEKE.

The active-site Proton acceptor is the His-238.

This sequence belongs to the transferase hexapeptide repeat family. LpxD subfamily. Homotrimer.

The catalysed reaction is a UDP-3-O-[(3R)-3-hydroxyacyl]-alpha-D-glucosamine + a (3R)-hydroxyacyl-[ACP] = a UDP-2-N,3-O-bis[(3R)-3-hydroxyacyl]-alpha-D-glucosamine + holo-[ACP] + H(+). Its pathway is bacterial outer membrane biogenesis; LPS lipid A biosynthesis. Functionally, catalyzes the N-acylation of UDP-3-O-acylglucosamine using 3-hydroxyacyl-ACP as the acyl donor. Is involved in the biosynthesis of lipid A, a phosphorylated glycolipid that anchors the lipopolysaccharide to the outer membrane of the cell. The chain is UDP-3-O-acylglucosamine N-acyltransferase from Xanthomonas euvesicatoria pv. vesicatoria (strain 85-10) (Xanthomonas campestris pv. vesicatoria).